Reading from the N-terminus, the 229-residue chain is MDKIKQLFANNYSWAQRMKEENSTYFKELADHQTPHYLWIGCSDSRVPAEKLTNLEPGELFVHRNVANQVIHTDFNCLSVVQYAVDVLKIEHIIICGHTNCGGIHAAMADKDLGLINNWLLHIRDIWFKHGHLLGKLSPEKRADMLTKINVAEQVYNLGRTSIVKSAWERGQKLSLHGWVYDVNDGFLVDQGVMATSRETLEISYRNAIARLSILDEENILKKDHLENT.

Positions 42, 44, 98, and 101 each coordinate Zn(2+).

It belongs to the beta-class carbonic anhydrase family. It depends on Zn(2+) as a cofactor.

The catalysed reaction is hydrogencarbonate + H(+) = CO2 + H2O. This Haemophilus influenzae (strain ATCC 51907 / DSM 11121 / KW20 / Rd) protein is Carbonic anhydrase 2 (can).